The chain runs to 438 residues: Serine hydroxymethyltransferase (438 aa).

Residues L135 and 139-141 contribute to the (6S)-5,6,7,8-tetrahydrofolate site; that span reads GHL. K244 carries the N6-(pyridoxal phosphate)lysine modification. Positions 361-383 are disordered; sequence GVPNDPLPPVKTSGIRVGSPAGT.

The protein belongs to the SHMT family. As to quaternary structure, homodimer. It depends on pyridoxal 5'-phosphate as a cofactor.

It is found in the cytoplasm. The enzyme catalyses (6R)-5,10-methylene-5,6,7,8-tetrahydrofolate + glycine + H2O = (6S)-5,6,7,8-tetrahydrofolate + L-serine. It functions in the pathway one-carbon metabolism; tetrahydrofolate interconversion. It participates in amino-acid biosynthesis; glycine biosynthesis; glycine from L-serine: step 1/1. Catalyzes the reversible interconversion of serine and glycine with tetrahydrofolate (THF) serving as the one-carbon carrier. This reaction serves as the major source of one-carbon groups required for the biosynthesis of purines, thymidylate, methionine, and other important biomolecules. Also exhibits THF-independent aldolase activity toward beta-hydroxyamino acids, producing glycine and aldehydes, via a retro-aldol mechanism. In Rhizorhabdus wittichii (strain DSM 6014 / CCUG 31198 / JCM 15750 / NBRC 105917 / EY 4224 / RW1) (Sphingomonas wittichii), this protein is Serine hydroxymethyltransferase.